The following is a 343-amino-acid chain: Uroporphyrinogen decarboxylase (343 aa).

Substrate-binding positions include 26 to 30 (RQAGR), Asp75, Tyr150, Ser205, and His319.

Belongs to the uroporphyrinogen decarboxylase family. Homodimer.

It localises to the cytoplasm. The enzyme catalyses uroporphyrinogen III + 4 H(+) = coproporphyrinogen III + 4 CO2. It functions in the pathway porphyrin-containing compound metabolism; protoporphyrin-IX biosynthesis; coproporphyrinogen-III from 5-aminolevulinate: step 4/4. Catalyzes the decarboxylation of four acetate groups of uroporphyrinogen-III to yield coproporphyrinogen-III. This chain is Uroporphyrinogen decarboxylase, found in Syntrophotalea carbinolica (strain DSM 2380 / NBRC 103641 / GraBd1) (Pelobacter carbinolicus).